The chain runs to 220 residues: Coat protein TP4 (220 aa).

Its subcellular location is the virion. This Thermoproteus tenax (TTV1) protein is Coat protein TP4.